Here is a 280-residue protein sequence, read N- to C-terminus: Protein lyl-1 (280 aa).

The segment at 1 to 60 (MCPPQAQAEVGPTMTEKAEMVCAPSPAPAPPPKPASPGPPQVEEVGHRGGSSPPRLPPGV) is disordered. The segment covering 25–40 (SPAPAPPPKPASPGPP) has biased composition (pro residues). In terms of domain architecture, bHLH spans 150-202 (ARRVFTNSRERWRQQNVNGAFAELRKLLPTHPPDRKLSKNEVLRLAMKYIGFL). Positions 214–280 (AAGPTPPGPR…EQTALSPEVR (67 aa)) are disordered. The span at 229–245 (RVPDDGARRGSGRRAEA) shows a compositional bias: basic and acidic residues. Residues 257 to 267 (PDGSPGGAARP) are compositionally biased toward low complexity. Phosphoserine is present on residues S260 and S276.

In terms of assembly, efficient DNA binding requires dimerization with another bHLH protein.

Its subcellular location is the nucleus. The chain is Protein lyl-1 (LYL1) from Homo sapiens (Human).